The chain runs to 661 residues: uncharacterized protein (661 aa).

The next 16 membrane-spanning stretches (helical) occupy residues 27–47, 68–88, 116–136, 150–170, 179–199, 214–234, 251–271, 279–299, 313–333, 369–389, 396–416, 435–455, 488–508, 519–539, 552–572, and 599–619; these read LAIG…VSGA, VGFF…IHVV, LWLG…TGVG, VAAS…LVVA, WLGH…TAVT, AAIV…AAAL, GALA…GWAV, GLLA…RLLV, GAAL…VMTA, SLIG…FAAL, WPVG…FTSG, MTLN…TLAL, PITA…TPLF, EFMA…IIGI, IGLL…LMTM, and GGGI…VALV.

This sequence to M.leprae ML1998.

The protein resides in the cell membrane. This is an uncharacterized protein from Mycobacterium tuberculosis (strain CDC 1551 / Oshkosh).